Consider the following 343-residue polypeptide: Calcium/calmodulin-dependent protein kinase type 1B (343 aa).

Positions 15 to 270 (YEIREKLGSG…CQQALQHLWI (256 aa)) constitute a Protein kinase domain. ATP-binding positions include 21–29 (LGSGAFSEV) and K44. Catalysis depends on D136, which acts as the Proton acceptor. The segment at 290–311 (KNFARTHWKRAFNATSFLRHIR) is calmodulin-binding. The interval 314–343 (GQSPEGEEASRQCMTRHSHPGLGTSQSPKW) is disordered. S338 carries the post-translational modification Phosphoserine.

This sequence belongs to the protein kinase superfamily. CAMK Ser/Thr protein kinase family. CaMK subfamily. As to expression, expressed at highest levels in adult brain, and expressed in embryo. In the adult brain detected at high levels in the anterior olfactory nuclei, piriform cortex, septal nuclei, bed nuclei of the stria terminalis, hippocampal pyramidal cells, dentate granule cells, amygdala, hypothalamic nuclei, parabrachial nucleus, and nucleus of the solitary tract. Expressed at lower levels in adult ovary and heart and at very low levels in testis, lung and muscle.

It is found in the cytoplasm. The protein resides in the nucleus. It carries out the reaction L-seryl-[protein] + ATP = O-phospho-L-seryl-[protein] + ADP + H(+). The enzyme catalyses L-threonyl-[protein] + ATP = O-phospho-L-threonyl-[protein] + ADP + H(+). Its activity is regulated as follows. Activated by Ca(2+)/calmodulin. Calcium/calmodulin-dependent protein kinase belonging to a proposed calcium-triggered signaling cascade. In vitro phosphorylates CREB1 and SYN1/synapsin I. Phosphorylates and activates CAMK1. The polypeptide is Calcium/calmodulin-dependent protein kinase type 1B (Pnck) (Mus musculus (Mouse)).